The following is a 262-amino-acid chain: uncharacterized protein (262 aa).

3 helical membrane-spanning segments follow: residues 4-24 (LIVF…RFLG), 28-48 (VSRF…CLFR), and 62-82 (CYLA…SHIL). The stretch at 152-181 (EREARAQEHDRISAEVETITSACENLEAAM) forms a coiled coil.

It localises to the mitochondrion membrane. This is an uncharacterized protein from Arabidopsis thaliana (Mouse-ear cress).